Here is a 446-residue protein sequence, read N- to C-terminus: Glutamyl-tRNA reductase (446 aa).

Residues threonine 49–arginine 52, serine 107, glutamate 112–glutamine 114, and glutamine 118 contribute to the substrate site. The active-site Nucleophile is the cysteine 50. Glycine 187 to isoleucine 192 is an NADP(+) binding site. Residues asparagine 417 to glycine 446 form a disordered region. Positions glutamate 420 to glutamine 430 are enriched in basic and acidic residues.

This sequence belongs to the glutamyl-tRNA reductase family. Homodimer.

It carries out the reaction (S)-4-amino-5-oxopentanoate + tRNA(Glu) + NADP(+) = L-glutamyl-tRNA(Glu) + NADPH + H(+). It functions in the pathway porphyrin-containing compound metabolism; protoporphyrin-IX biosynthesis; 5-aminolevulinate from L-glutamyl-tRNA(Glu): step 1/2. Functionally, catalyzes the NADPH-dependent reduction of glutamyl-tRNA(Glu) to glutamate 1-semialdehyde (GSA). This is Glutamyl-tRNA reductase from Alkalilimnicola ehrlichii (strain ATCC BAA-1101 / DSM 17681 / MLHE-1).